A 148-amino-acid polypeptide reads, in one-letter code: Putative cyclin-dependent kinase inhibitor SPL2 (148 aa).

A phosphoserine mark is found at S59 and S86.

Its subcellular location is the cytoplasmic granule. It is found in the cytoplasm. Its function is as follows. Putative cyclin-dependent kinase (CDK) inhibitor necessary and sufficient for PHO pathway-dependent down-regulation of low-affinity phosphate transport. This Saccharomyces cerevisiae (strain ATCC 204508 / S288c) (Baker's yeast) protein is Putative cyclin-dependent kinase inhibitor SPL2 (SPL2).